The sequence spans 320 residues: Myeloid-associated differentiation marker (320 aa).

MARVEL domains are found at residues 25 to 157 (ALTQ…ARPG) and 162 to 317 (YMAT…RLVF). 8 helical membrane-spanning segments follow: residues 35–55 (LLQLISTCVAFSLVASVGAWT), 61–81 (WAMFTWCFCFAVTLIILIVEL), 95–115 (FPITFACYAALFCLSSSIIYP), 131–151 (AIAATTFSCVACLAYATEVAW), 165–185 (TVPGLLKVFETFVACIIFAFI), 197–217 (LEWCVAVYAICFILAGVTILL), 233–253 (FLSGLALLSVLFYATAIVLWP), and 292–312 (LAVSILTGINLLAYVSDLVYS).

It belongs to the MAL family.

It is found in the membrane. The sequence is that of Myeloid-associated differentiation marker (Myadm) from Mus musculus (Mouse).